The sequence spans 137 residues: Nucleoside diphosphate kinase (137 aa).

The ATP site is built by lysine 9, phenylalanine 57, arginine 85, threonine 91, arginine 102, and asparagine 112. The Pros-phosphohistidine intermediate role is filled by histidine 115.

Belongs to the NDK family. Homotetramer. Mg(2+) is required as a cofactor.

It is found in the cytoplasm. It catalyses the reaction a 2'-deoxyribonucleoside 5'-diphosphate + ATP = a 2'-deoxyribonucleoside 5'-triphosphate + ADP. The enzyme catalyses a ribonucleoside 5'-diphosphate + ATP = a ribonucleoside 5'-triphosphate + ADP. Major role in the synthesis of nucleoside triphosphates other than ATP. The ATP gamma phosphate is transferred to the NDP beta phosphate via a ping-pong mechanism, using a phosphorylated active-site intermediate. The sequence is that of Nucleoside diphosphate kinase from Geobacter sp. (strain M21).